Here is a 275-residue protein sequence, read N- to C-terminus: MPELPEVEVTRRGIAPFVAGRRVERVDVRTAMLRWPVPAGLAEQLRAREVLAVERRGKYLLFEVDAGWFIVHLGMTGTLRVLPAGGVPVAAKHDHIDWIFDEFVLRFRDPRRFGAVLWHSREAGDVHAHPLLASLGVEPFSPAFDGALLHRRTRGRTVSVKQALLAGDIVVGVGNIYASESLFRAGIRPTTAAGKVSLPRYERLAEAVRATLADAIDRGGSTLRDFVGSNGESGYFQLDCFVYDRAGEPCRVCGTPIRQIVQGQRSTYFCPTCQR.

Pro-2 (schiff-base intermediate with DNA) is an active-site residue. The active-site Proton donor is the Glu-3. Lys-58 acts as the Proton donor; for beta-elimination activity in catalysis. The DNA site is built by His-93, Arg-111, and Arg-156. An FPG-type zinc finger spans residues 241–275; sequence FVYDRAGEPCRVCGTPIRQIVQGQRSTYFCPTCQR. Arg-265 functions as the Proton donor; for delta-elimination activity in the catalytic mechanism.

It belongs to the FPG family. Monomer. It depends on Zn(2+) as a cofactor.

The catalysed reaction is Hydrolysis of DNA containing ring-opened 7-methylguanine residues, releasing 2,6-diamino-4-hydroxy-5-(N-methyl)formamidopyrimidine.. The enzyme catalyses 2'-deoxyribonucleotide-(2'-deoxyribose 5'-phosphate)-2'-deoxyribonucleotide-DNA = a 3'-end 2'-deoxyribonucleotide-(2,3-dehydro-2,3-deoxyribose 5'-phosphate)-DNA + a 5'-end 5'-phospho-2'-deoxyribonucleoside-DNA + H(+). Its function is as follows. Involved in base excision repair of DNA damaged by oxidation or by mutagenic agents. Acts as a DNA glycosylase that recognizes and removes damaged bases. Has a preference for oxidized purines, such as 7,8-dihydro-8-oxoguanine (8-oxoG). Has AP (apurinic/apyrimidinic) lyase activity and introduces nicks in the DNA strand. Cleaves the DNA backbone by beta-delta elimination to generate a single-strand break at the site of the removed base with both 3'- and 5'-phosphates. The chain is Formamidopyrimidine-DNA glycosylase from Burkholderia multivorans (strain ATCC 17616 / 249).